We begin with the raw amino-acid sequence, 932 residues long: MTELKAKGPRAPHVAGGPPSPEVGSPLLCRPAAGQFPGSQTSDTLPEVSAIPISLDGLLFPRPCQGQDPSYEKTQDQQSLSDVEGAYSRAEATRGAGGSSSSPPEKESGLLDSVLDTLLAPSGPRQSQPSPPACEVTSSWSLFGPELPEDPPAAPATQGVLSPLMSRSGGKAGDSSGTAAAHKVLPQGLSPSRQLLLPASGSPHWSGAPVKPSPQPAAVEVEEEDGSESEDSAGPLLKGKPRALGGAAAGGAAAVPPGAAAGGVALVPKEDSRFSAPRVALVEQDAPMAPGRSPLATTVMDFIHVPILPLNHALLAARTRQLLEDENYDGGAGAASAFAPPRSSPSASSTPVAVGDFPDCAYPPDVEPKDDAYPLYGDFQPPALKIKEEEEGAEASARTPRSYLVAGANPAAFPDFPLGPPPPLPPRAPPSRPGEAAVTAAPASASVSSASSSGSTLECILYKAEGAPPQQGPFAPPPSKAPGAGGCLPPRDGLPSTAASASAAGAAPALYPALRLNGLPQLGYQAAVLKEGLPQVYPPYLNYLRPDSEASQSPQYSFESLPQKICLICGDEASGCHYGVLTCGSCKVFFKRAMEGQHNYLCAGRNDCIVDKIRRKNCPACRLRKCCQAGMVLGGRKFKKFNKVRVVRALDAVALPQPVGIPNESQVLSQRITFSPGQDIQLIPPLINLLMSIEPDVIYAGHDNTKPDTSSSLLTSLNQLGERQLLSVVKWSKSLPGFRNLHIDDQITLIQYSWMSLMVFGLGWRSYKHVSGQMLYFAPDLILNEQRMKESSFYSLCLTMWQIPQEFVKLQVSQEEFLCMKVLLLLNTIPLEGLRSQTQFEEMRASYIRELIKAIGLRQKGVVSSSQRFYQLTKLLDNLHDLVKQLHLYCLNTFIQSRALSVEFPEMMSEVIAAQLPKILAGMVKPLLFHKK.

The AF3; mediates transcriptional activation stretch occupies residues Met1–Leu164. A disordered region spans residues Met1–Ala254. The tract at residues Met1 to Ile565 is modulating, Pro-Rich. Residue Ser20 is modified to Phosphoserine. An LXXL motif 1 motif is present at residues Leu55–Leu59. Position 81 is a phosphoserine (Ser81). Residues Ser88–Pro103 are compositionally biased toward low complexity. The LXXL motif 2 signature appears at Leu115–Leu119. Phosphoserine occurs at positions 130 and 162. The interval Met165 to His304 is mediates transcriptional transrepression. A Nuclear localization signal motif is present at residues Lys183 to Gln187. 2 positions are modified to phosphoserine: Ser190 and Ser213. A compositionally biased stretch (acidic residues) spans Glu220–Asp231. Low complexity predominate over residues Ser232–Ala254. Ser293 bears the Phosphoserine; by MAPK1 mark. Over residues Ala334–Ser349 the composition is skewed to low complexity. Positions Ala334–Asp356 are disordered. Phosphoserine; by MAPK is present on Ser344. Lys387 is covalently cross-linked (Glycyl lysine isopeptide (Lys-Gly) (interchain with G-Cter in SUMO); alternate). Lys387 is covalently cross-linked (Glycyl lysine isopeptide (Lys-Gly) (interchain with G-Cter in ubiquitin); alternate). Disordered stretches follow at residues Pro414–Ser451 and Pro468–Ala499. Positions Pro417–Arg432 are enriched in pro residues. Residues Pro433 to Ser451 show a composition bias toward low complexity. The segment at Ser455–Arg545 is AF1; mediates transcriptional activation. Over residues Gln470–Lys480 the composition is skewed to pro residues. Lys530 participates in a covalent cross-link: Glycyl lysine isopeptide (Lys-Gly) (interchain with G-Cter in SUMO). 2 consecutive NR C4-type zinc fingers follow at residues Cys566–Cys586 and Cys602–Cys626. Positions Cys566–Phe638 form a DNA-binding region, nuclear receptor. Ser675 is subject to Phosphoserine. One can recognise an NR LBD domain in the interval Gln678–Ile912. The AF2; mediates transcriptional activation stretch occupies residues Leu686–Lys932. Arg765 provides a ligand contact to progesterone.

The protein belongs to the nuclear hormone receptor family. As to quaternary structure, interacts with SMARD1 and UNC45A. Interacts with CUEDC2; the interaction promotes ubiquitination, decreases sumoylation, and represses transcriptional activity. Interacts with PIAS3; the interaction promotes sumoylation of PR in a hormone-dependent manner, inhibits DNA-binding, and alters nuclear export. Interacts with SP1; the interaction requires ligand-induced phosphorylation on Ser-344 by ERK1/2-MAPK. Interacts with PRMT2. Interacts with NCOA2 and NCOA1. Interacts with KLF9. Interacts with GTF2B. Phosphorylated on multiple serine sites. Several of these sites are hormone-dependent. Phosphorylation on Ser-293 is highly hormone-dependent and modulates ubiquitination and sumoylation on Lys-387. Phosphorylation on Ser-102 and Ser-344 also requires induction by hormone. Basal phosphorylation on Ser-81, Ser-162 and Ser-190 is increased in response to progesterone and can be phosphorylated in vitro by the CDK2-A1 complex. Phosphorylation at Ser-162 and Ser-293, but not at Ser-190, is impaired during the G(2)/M phase of the cell cycle. Phosphorylation on Ser-344 by ERK1/2 MAPK is required for interaction with SP1. In terms of processing, sumoylation is hormone-dependent and represses transcriptional activity. Sumoylation on all three sites is enhanced by PIAS3. Desumoylated by SENP1. Sumoylation on Lys-387, the main site of sumoylation, is repressed by ubiquitination on the same site, and modulated by phosphorylation at Ser-293. Post-translationally, ubiquitination is hormone-dependent and represses sumoylation on the same site. Promoted by MAPK-mediated phosphorylation on Ser-293. Ubiquitinated by UBR5, leading to its degradation: UBR5 specifically recognizes and binds ligand-bound PGR when it is not associated with coactivators (NCOAs). In presence of NCOAs, the UBR5-degron is not accessible, preventing its ubiquitination and degradation. Palmitoylated by ZDHHC7 and ZDHHC21. Palmitoylation is required for plasma membrane targeting and for rapid intracellular signaling via ERK and AKT kinases and cAMP generation.

It is found in the nucleus. Its subcellular location is the cytoplasm. Functionally, the steroid hormones and their receptors are involved in the regulation of eukaryotic gene expression and affect cellular proliferation and differentiation in target tissues. Transcriptional activator of several progesteron-dependent promoters in a variety of cell types. Involved in activation of SRC-dependent MAPK signaling on hormone stimulation. The sequence is that of Progesterone receptor (PGR) from Hylobates lar (Lar gibbon).